The following is a 310-amino-acid chain: Protein TIFY 6A (310 aa).

Residues 141 to 176 (SKPLPPQLTIFYAGSVLVYQDIAPEKAQAIMLLAGN) form the Tify domain. The short motif at 259–284 (PQTRKASLARFLEKRKERVINVSPYY) is the Jas element. A Nuclear localization signal motif is present at residues 261–268 (TRKASLAR).

Belongs to the TIFY/JAZ family. Homo- and heterodimer. Interacts with MYC2, AFPH2/NINJA, TIFY10A/JAZ1, TIFY6B/JAZ3, TIFY5A/JAZ8, TIFY9/JAZ10 and TIFY3A/JAZ11. Interacts with RHD6 and RSL1. Ubiquitinated. Targeted for degradation by the SCF(COI1) E3 ubiquitin ligase-proteasome pathway during jasmonate signaling.

It localises to the nucleus. Its function is as follows. Repressor of jasmonate responses. Interacts with and suppresses RHD6 and RSL1 transcription factor activities to negatively regulate jasmonate-stimulated root hair development. In Arabidopsis thaliana (Mouse-ear cress), this protein is Protein TIFY 6A (TIFY6A).